Reading from the N-terminus, the 550-residue chain is CTP synthase (550 aa).

Residues 1-270 form an amidoligase domain region; it reads MTKFVFVTGG…DRLICEELRL (270 aa). Residue S13 participates in CTP binding. S13 contacts UTP. Residues 14 to 19 and D71 contribute to the ATP site; that span reads SLGKGI. Positions 71 and 144 each coordinate Mg(2+). CTP is bound by residues 151–153, 191–196, and K227; these read DIE and KTKPTQ. UTP contacts are provided by residues 191-196 and K227; that span reads KTKPTQ. The Glutamine amidotransferase type-1 domain occupies 295 to 547; that stretch reads TIGMVGKYVD…VEAALASQQR (253 aa). G356 lines the L-glutamine pocket. Catalysis depends on C383, which acts as the Nucleophile; for glutamine hydrolysis. L-glutamine-binding positions include 384-387, E407, and R473; that span reads LGMQ. Active-site residues include H520 and E522.

The protein belongs to the CTP synthase family. As to quaternary structure, homotetramer.

The enzyme catalyses UTP + L-glutamine + ATP + H2O = CTP + L-glutamate + ADP + phosphate + 2 H(+). The catalysed reaction is L-glutamine + H2O = L-glutamate + NH4(+). It carries out the reaction UTP + NH4(+) + ATP = CTP + ADP + phosphate + 2 H(+). The protein operates within pyrimidine metabolism; CTP biosynthesis via de novo pathway; CTP from UDP: step 2/2. Its activity is regulated as follows. Allosterically activated by GTP, when glutamine is the substrate; GTP has no effect on the reaction when ammonia is the substrate. The allosteric effector GTP functions by stabilizing the protein conformation that binds the tetrahedral intermediate(s) formed during glutamine hydrolysis. Inhibited by the product CTP, via allosteric rather than competitive inhibition. Catalyzes the ATP-dependent amination of UTP to CTP with either L-glutamine or ammonia as the source of nitrogen. Regulates intracellular CTP levels through interactions with the four ribonucleotide triphosphates. This is CTP synthase from Cupriavidus necator (strain ATCC 17699 / DSM 428 / KCTC 22496 / NCIMB 10442 / H16 / Stanier 337) (Ralstonia eutropha).